The following is a 59-amino-acid chain: UPF0391 membrane protein Geob_0344 (59 aa).

The next 2 membrane-spanning stretches (helical) occupy residues 4-24 (WAAIFFIIAIVAAVFGFTGIA) and 33-53 (FLFILFLVVALIMLILGITAG).

This sequence belongs to the UPF0391 family.

The protein resides in the cell membrane. The chain is UPF0391 membrane protein Geob_0344 from Geotalea daltonii (strain DSM 22248 / JCM 15807 / FRC-32) (Geobacter daltonii).